The primary structure comprises 340 residues: 4-dimethylallyltryptophan N-methyltransferase easF (340 aa).

The protein belongs to the methyltransferase superfamily. In terms of assembly, homodimer.

The enzyme catalyses 4-(3-methylbut-2-enyl)-L-tryptophan + S-adenosyl-L-methionine = 4-(3-methylbut-2-enyl)-L-abrine + S-adenosyl-L-homocysteine + H(+). It participates in alkaloid biosynthesis; ergot alkaloid biosynthesis. Functionally, 4-dimethylallyltryptophan N-methyltransferase; part of the gene cluster that mediates the biosynthesis of fungal ergot alkaloid. DmaW catalyzes the first step of ergot alkaloid biosynthesis by condensing dimethylallyl diphosphate (DMAP) and tryptophan to form 4-dimethylallyl-L-tryptophan. The second step is catalyzed by the methyltransferase easF that methylates 4-dimethylallyl-L-tryptophan in the presence of S-adenosyl-L-methionine, resulting in the formation of 4-dimethylallyl-L-abrine. The catalase easC and the FAD-dependent oxidoreductase easE then transform 4-dimethylallyl-L-abrine to chanoclavine-I which is further oxidized by easD in the presence of NAD(+), resulting in the formation of chanoclavine-I aldehyde. Chanoclavine-I aldehyde is the precursor of ergoamides and ergopeptines in Clavicipitaceae, and clavine-type alcaloids such as fumiclavine in Trichocomaceae. However, the metabolites downstream of chanoclavine-I aldehyde in Arthrodermataceae have not been identified yet. The protein is 4-dimethylallyltryptophan N-methyltransferase easF of Trichophyton verrucosum (strain HKI 0517).